We begin with the raw amino-acid sequence, 451 residues long: Tubulin alpha-2 chain (451 aa).

Gln-11 serves as a coordination point for GTP. Lys-40 carries the N6-acetyllysine modification. 6 residues coordinate GTP: Glu-71, Gly-144, Thr-145, Thr-179, Asn-206, and Asn-228. Glu-71 is a Mg(2+) binding site. The active site involves Glu-254.

It belongs to the tubulin family. As to quaternary structure, dimer of alpha and beta chains. A typical microtubule is a hollow water-filled tube with an outer diameter of 25 nm and an inner diameter of 15 nM. Alpha-beta heterodimers associate head-to-tail to form protofilaments running lengthwise along the microtubule wall with the beta-tubulin subunit facing the microtubule plus end conferring a structural polarity. Microtubules usually have 13 protofilaments but different protofilament numbers can be found in some organisms and specialized cells. The cofactor is Mg(2+). Post-translationally, undergoes a tyrosination/detyrosination cycle, the cyclic removal and re-addition of a C-terminal tyrosine residue by the enzymes tubulin tyrosine carboxypeptidase (TTCP) and tubulin tyrosine ligase (TTL), respectively. In terms of processing, acetylation of alpha chains at Lys-40 stabilizes microtubules and affects affinity and processivity of microtubule motors. This modification has a role in multiple cellular functions, ranging from cell motility, cell cycle progression or cell differentiation to intracellular trafficking and signaling.

The protein localises to the cytoplasm. It localises to the cytoskeleton. It carries out the reaction GTP + H2O = GDP + phosphate + H(+). Functionally, tubulin is the major constituent of microtubules, a cylinder consisting of laterally associated linear protofilaments composed of alpha- and beta-tubulin heterodimers. Microtubules grow by the addition of GTP-tubulin dimers to the microtubule end, where a stabilizing cap forms. Below the cap, tubulin dimers are in GDP-bound state, owing to GTPase activity of alpha-tubulin. The protein is Tubulin alpha-2 chain (TUBA2) of Hordeum vulgare (Barley).